Consider the following 492-residue polypeptide: Adenosylhomocysteinase (492 aa).

Substrate contacts are provided by Thr-68, Asp-153, and Glu-215. Position 216–218 (216–218 (TTT)) interacts with NAD(+). Residues Lys-245 and Asp-249 each contribute to the substrate site. NAD(+)-binding positions include Asn-250, 279–284 (GYGDVG), Glu-302, Asn-337, 358–360 (IGH), and Asn-406.

The protein belongs to the adenosylhomocysteinase family. NAD(+) serves as cofactor.

The protein localises to the cytoplasm. It carries out the reaction S-adenosyl-L-homocysteine + H2O = L-homocysteine + adenosine. It functions in the pathway amino-acid biosynthesis; L-homocysteine biosynthesis; L-homocysteine from S-adenosyl-L-homocysteine: step 1/1. In terms of biological role, may play a key role in the regulation of the intracellular concentration of adenosylhomocysteine. The polypeptide is Adenosylhomocysteinase (Mycobacterium ulcerans (strain Agy99)).